We begin with the raw amino-acid sequence, 66 residues long: Large ribosomal subunit protein bL35 (66 aa).

Basic residues-rich tracts occupy residues 1 to 16 (MPKQ…RVKR) and 23 to 45 (KRGR…RQLR). The tract at residues 1 to 53 (MPKQKTHRGLAKRVKRTGGGGLKRGRAFTSHRFHGKTKKQRRQLRKASMVAKG) is disordered.

This sequence belongs to the bacterial ribosomal protein bL35 family.

This Enterococcus faecalis (strain ATCC 700802 / V583) protein is Large ribosomal subunit protein bL35.